The chain runs to 495 residues: Pentatricopeptide repeat-containing protein PPR5 homolog, chloroplastic (495 aa).

Positions 1 to 24 (MLAYPTTSSPWPPRHHGAAAAPAA) are disordered. The N-terminal 29 residues, 1 to 29 (MLAYPTTSSPWPPRHHGAAAAPAARRHMA), are a transit peptide targeting the chloroplast. PPR repeat units lie at residues 120 to 154 (DNGIYSKLISVMGRKGQIRMAMWLFSQMRNSGCRP), 155 to 189 (DTSVYNSLIGTHLHSRDKSKALAKALGYFEKMKTI), 195 to 229 (NIVTYNILLRAFAQAGDTKQLDILFKDLDESPVSP), 230 to 264 (DIYTYNGVMDAYGKNGMITEMESVLVRMKSNQCRP), 265 to 299 (DVITFNILIDSYGRKQAFDKMEQVFKSLLRSKEKP), 300 to 334 (THPTFNSMITNYGKARLREKAECVLDKMTEMGFKP), 335 to 365 (NYVTQECLIMMYAYCDCVSRARQIFDELVSS), 370 to 404 (HLSSVNAMLDAYCMNGLPMEADQLLDSVIKKGAVP), and 405 to 439 (SASTYKLLYKAYTKANDKKLIQKLLKRMNSQGIVP). Residues 455 to 495 (DKKPRTVPSKNSASKPDVESANNSGTDTSSKPNLSVWQVAA) form a disordered region. Positions 462–495 (PSKNSASKPDVESANNSGTDTSSKPNLSVWQVAA) are enriched in polar residues.

Belongs to the PPR family. P subfamily.

Its subcellular location is the plastid. The protein localises to the chloroplast. Involved in the biogenesis of the plastid translation machinery by promoting the splicing of group II introns in chloroplasts. The protein is Pentatricopeptide repeat-containing protein PPR5 homolog, chloroplastic of Oryza sativa subsp. japonica (Rice).